We begin with the raw amino-acid sequence, 250 residues long: DNA repair protein RecO (250 aa).

It belongs to the RecO family.

Involved in DNA repair and RecF pathway recombination. In Staphylococcus aureus (strain Mu3 / ATCC 700698), this protein is DNA repair protein RecO.